The sequence spans 215 residues: Ribonuclease T (215 aa).

The Exonuclease domain maps to 20-194 (VVIDVETAGF…YDTLQTAKLF (175 aa)). Positions 23, 25, 181, and 186 each coordinate Mg(2+). H181 serves as the catalytic Proton donor/acceptor.

This sequence belongs to the RNase T family. Homodimer. The cofactor is Mg(2+).

In terms of biological role, trims short 3' overhangs of a variety of RNA species, leaving a one or two nucleotide 3' overhang. Responsible for the end-turnover of tRNA: specifically removes the terminal AMP residue from uncharged tRNA (tRNA-C-C-A). Also appears to be involved in tRNA biosynthesis. The protein is Ribonuclease T of Yersinia pseudotuberculosis serotype O:1b (strain IP 31758).